The primary structure comprises 366 residues: MTQIIIAGAVGLLVSIFVTPVLIRRFSAEGLGQEIREDGPKSHLRKRGTPTMGGIAILIGITVAYAVTGIVGQVTGTGGLTASGLLVLGLTLALGGLGFADDFIKLYMGRNLGLNKKAKLIGQLAISLIFGALILLFPNADGLTPGSSHLSFLRDLPTVDLAIGPKAVGIAIFLLFIYILISAWSNAVNLTDGLDGLAAGSTAIVMGTYTVITFWQFRNSCSAGAQPGCYDVRDPLDLAILAAAGLGACLGFLWWNAAPAKIFMGDTGSLALGGLVAGLSVASRTELLMIIVGALFVLEAASVVIQVAGYRTKKIRIFRMAPFHHHFENGGWAETTVVIRFWLIAAVAALIGASIFYGEWLSLTGV.

The next 10 helical transmembrane spans lie at 3 to 23 (QIII…PVLI), 52 to 72 (MGGI…GIVG), 80 to 100 (LTAS…LGFA), 120 to 140 (LIGQ…FPNA), 161 to 181 (LAIG…YILI), 197 to 217 (LAAG…FWQF), 238 to 258 (LAIL…WNAA), 262 to 282 (IFMG…LSVA), 287 to 307 (LLMI…VIQV), and 341 to 361 (FWLI…GEWL).

Belongs to the glycosyltransferase 4 family. MraY subfamily. The cofactor is Mg(2+).

Its subcellular location is the cell membrane. It catalyses the reaction UDP-N-acetyl-alpha-D-muramoyl-L-alanyl-gamma-D-glutamyl-meso-2,6-diaminopimeloyl-D-alanyl-D-alanine + di-trans,octa-cis-undecaprenyl phosphate = di-trans,octa-cis-undecaprenyl diphospho-N-acetyl-alpha-D-muramoyl-L-alanyl-D-glutamyl-meso-2,6-diaminopimeloyl-D-alanyl-D-alanine + UMP. The protein operates within cell wall biogenesis; peptidoglycan biosynthesis. Its function is as follows. Catalyzes the initial step of the lipid cycle reactions in the biosynthesis of the cell wall peptidoglycan: transfers peptidoglycan precursor phospho-MurNAc-pentapeptide from UDP-MurNAc-pentapeptide onto the lipid carrier undecaprenyl phosphate, yielding undecaprenyl-pyrophosphoryl-MurNAc-pentapeptide, known as lipid I. The sequence is that of Phospho-N-acetylmuramoyl-pentapeptide-transferase from Corynebacterium diphtheriae (strain ATCC 700971 / NCTC 13129 / Biotype gravis).